The sequence spans 310 residues: tRNA-cytidine(32) 2-sulfurtransferase (310 aa).

Residues Ser47–Ser52 carry the PP-loop motif motif. [4Fe-4S] cluster-binding residues include Cys122, Cys125, and Cys213.

The protein belongs to the TtcA family. As to quaternary structure, homodimer. Requires Mg(2+) as cofactor. The cofactor is [4Fe-4S] cluster.

It localises to the cytoplasm. It carries out the reaction cytidine(32) in tRNA + S-sulfanyl-L-cysteinyl-[cysteine desulfurase] + AH2 + ATP = 2-thiocytidine(32) in tRNA + L-cysteinyl-[cysteine desulfurase] + A + AMP + diphosphate + H(+). It functions in the pathway tRNA modification. In terms of biological role, catalyzes the ATP-dependent 2-thiolation of cytidine in position 32 of tRNA, to form 2-thiocytidine (s(2)C32). The sulfur atoms are provided by the cysteine/cysteine desulfurase (IscS) system. The protein is tRNA-cytidine(32) 2-sulfurtransferase of Haemophilus influenzae (strain PittEE).